Here is a 206-residue protein sequence, read N- to C-terminus: MPKVAVYNVKGEQVGEIELKDSVFGVPVNVPVMHEAVLNYLANQRQGTHSTKTRGEVRGGGRKPWRQKGTGRARQGSIRAPQWIKGGIVFGPKPRDYSYKLPKKVKRLALKSALSSKVRDNEIIVLDEFKLDQPKTKKVVELLKNFNVDSALIVVPEGEKNVELSARNIPGVKTLYANYLNTYDILKYDKFIITKDAVGIVEEVYA.

A disordered region spans residues 45–75; the sequence is RQGTHSTKTRGEVRGGGRKPWRQKGTGRARQ. Basic residues predominate over residues 60–71; that stretch reads GGRKPWRQKGTG.

This sequence belongs to the universal ribosomal protein uL4 family. Part of the 50S ribosomal subunit.

Its function is as follows. One of the primary rRNA binding proteins, this protein initially binds near the 5'-end of the 23S rRNA. It is important during the early stages of 50S assembly. It makes multiple contacts with different domains of the 23S rRNA in the assembled 50S subunit and ribosome. Forms part of the polypeptide exit tunnel. The protein is Large ribosomal subunit protein uL4 of Thermoanaerobacter pseudethanolicus (strain ATCC 33223 / 39E) (Clostridium thermohydrosulfuricum).